Here is a 244-residue protein sequence, read N- to C-terminus: DNA repair protein RecO (244 aa).

This sequence belongs to the RecO family.

Its function is as follows. Involved in DNA repair and RecF pathway recombination. In Myxococcus xanthus (strain DK1622), this protein is DNA repair protein RecO.